The following is a 368-amino-acid chain: Probable dual-specificity RNA methyltransferase RlmN (368 aa).

The active-site Proton acceptor is glutamate 108. The 232-residue stretch at 114 to 345 folds into the Radical SAM core domain; it reads HAYGNSVCVS…VTVRRGLGAD (232 aa). A disulfide bridge links cysteine 121 with cysteine 350. [4Fe-4S] cluster contacts are provided by cysteine 128, cysteine 132, and cysteine 135. S-adenosyl-L-methionine is bound by residues 175 to 176, serine 207, 230 to 232, and asparagine 307; these read GE and SLH. Cysteine 350 functions as the S-methylcysteine intermediate in the catalytic mechanism.

Belongs to the radical SAM superfamily. RlmN family. Requires [4Fe-4S] cluster as cofactor.

Its subcellular location is the cytoplasm. It catalyses the reaction adenosine(2503) in 23S rRNA + 2 reduced [2Fe-2S]-[ferredoxin] + 2 S-adenosyl-L-methionine = 2-methyladenosine(2503) in 23S rRNA + 5'-deoxyadenosine + L-methionine + 2 oxidized [2Fe-2S]-[ferredoxin] + S-adenosyl-L-homocysteine. The catalysed reaction is adenosine(37) in tRNA + 2 reduced [2Fe-2S]-[ferredoxin] + 2 S-adenosyl-L-methionine = 2-methyladenosine(37) in tRNA + 5'-deoxyadenosine + L-methionine + 2 oxidized [2Fe-2S]-[ferredoxin] + S-adenosyl-L-homocysteine. Functionally, specifically methylates position 2 of adenine 2503 in 23S rRNA and position 2 of adenine 37 in tRNAs. This Pelotomaculum thermopropionicum (strain DSM 13744 / JCM 10971 / SI) protein is Probable dual-specificity RNA methyltransferase RlmN.